A 306-amino-acid chain; its full sequence is MANTVQHRLRDWLLSLYQHLLPQRTLSQLMYRLTRHRIVWLTGLQIRLFARIFGVNLKEAEFSSPKDYPHFNAFFTRALGKEARPIADSADAVVSPVDGCISQLGSLTDDRLLQAKGWSYNLVELLGGSKSRAAPFRGGQFATLYLSPKDYHRIHMPLAGHLREMTYLPGRLFSVSPKTVNGIHNLFARNERVVNVFDTEAGPLAMVLVGAIFVGSIETVWAGQITPPYRHQPHHQLYEGEKAISLAKGQEMGRFNMGSTVILIFPPDTIHWQSELQAEMPVRMGQPLGQLITAVQTEVEKQWANA.

Catalysis depends on charge relay system; for autoendoproteolytic cleavage activity residues aspartate 98, histidine 155, and serine 259. Serine 259 serves as the catalytic Schiff-base intermediate with substrate; via pyruvic acid; for decarboxylase activity. Serine 259 bears the Pyruvic acid (Ser); by autocatalysis mark.

The protein belongs to the phosphatidylserine decarboxylase family. PSD-B subfamily. Prokaryotic type I sub-subfamily. In terms of assembly, heterodimer of a large membrane-associated beta subunit and a small pyruvoyl-containing alpha subunit. Pyruvate is required as a cofactor. Is synthesized initially as an inactive proenzyme. Formation of the active enzyme involves a self-maturation process in which the active site pyruvoyl group is generated from an internal serine residue via an autocatalytic post-translational modification. Two non-identical subunits are generated from the proenzyme in this reaction, and the pyruvate is formed at the N-terminus of the alpha chain, which is derived from the carboxyl end of the proenzyme. The autoendoproteolytic cleavage occurs by a canonical serine protease mechanism, in which the side chain hydroxyl group of the serine supplies its oxygen atom to form the C-terminus of the beta chain, while the remainder of the serine residue undergoes an oxidative deamination to produce ammonia and the pyruvoyl prosthetic group on the alpha chain. During this reaction, the Ser that is part of the protease active site of the proenzyme becomes the pyruvoyl prosthetic group, which constitutes an essential element of the active site of the mature decarboxylase.

It localises to the cell membrane. It catalyses the reaction a 1,2-diacyl-sn-glycero-3-phospho-L-serine + H(+) = a 1,2-diacyl-sn-glycero-3-phosphoethanolamine + CO2. Its pathway is phospholipid metabolism; phosphatidylethanolamine biosynthesis; phosphatidylethanolamine from CDP-diacylglycerol: step 2/2. Functionally, catalyzes the formation of phosphatidylethanolamine (PtdEtn) from phosphatidylserine (PtdSer). The chain is Phosphatidylserine decarboxylase proenzyme from Nitrosococcus oceani (strain ATCC 19707 / BCRC 17464 / JCM 30415 / NCIMB 11848 / C-107).